The sequence spans 392 residues: MAAAALGQIWARKFLSVPWLLCGPRRYASSSFKAADLQLEMTQKPHKKPGPGEPLVFGKTFTDHMLMVEWSDKGWGQPRIQPFQNLTLHPASSSLHYSLQLFEGMKAFKGKDQQVRLFRPWLNMDRMLRSAMRLCLPSFDKLELLECIRRLIEVDKDWVPDAAGTSLYVRPVLIGNEPSLGVSQPTRALLFVILCPVGTYFPGGSVTPVSLLADPAFIRAWVGGVGNYKLGGNYGPTVLVQQEALKQGCEQVLWLYGPDHQLTEVGTMNIFVYWTHEDGVLELVTPPLNGVILPGVVRQSLLDLAQTWGEFRVVERTITTKQLLQALEEGRVREVFGSGTACQVCPVHRILYKDRNLHIPTMENGPELILRFQKELKEIQYGIRAHEWMFPV.

Residues 1-27 (MAAAALGQIWARKFLSVPWLLCGPRRY) constitute a mitochondrion transit peptide. Residue Tyr-168 coordinates substrate. Lys-229 carries the post-translational modification N6-(pyridoxal phosphate)lysine. The residue at position 321 (Lys-321) is an N6-acetyllysine.

The protein belongs to the class-IV pyridoxal-phosphate-dependent aminotransferase family. In terms of assembly, homodimer. Requires pyridoxal 5'-phosphate as cofactor.

The protein localises to the mitochondrion. It catalyses the reaction L-leucine + 2-oxoglutarate = 4-methyl-2-oxopentanoate + L-glutamate. It carries out the reaction L-isoleucine + 2-oxoglutarate = (S)-3-methyl-2-oxopentanoate + L-glutamate. The catalysed reaction is L-valine + 2-oxoglutarate = 3-methyl-2-oxobutanoate + L-glutamate. In terms of biological role, catalyzes the first reaction in the catabolism of the essential branched chain amino acids leucine, isoleucine, and valine. May also function as a transporter of branched chain alpha-keto acids. In Pongo abelii (Sumatran orangutan), this protein is Branched-chain-amino-acid aminotransferase, mitochondrial (BCAT2).